A 469-amino-acid chain; its full sequence is MSAVNTPADFNDYKVADMSLAAWGRRETFIAESEMPALMGLRRKYAAEQPLKGAKILGCIHMTIQTAVLIETLVALGAEVRWSSCNIFSTQDQAAAAIAAAGIPVFAWKGETEEEYEWCLEQTILKDGAPWDANMILDDGGDLTELLHKKYPAILDRVHGVTEETTTGVHRLLDMLAKGELKIPAINVNDSVTKSKNDNKYGCRHSLNDAIKRGTDHLLSGKQALVIGYGDVGKGSSQSLRQEGMIVKVSEVDPICAMQACMDGFEVVSPFIDGVNDGTEASIDKALLGKIDLIVTTTGNVNVCDANMLKALKKRAVVCNIGHFDNEIDTAFMRKNWAWEEVKPQVHKVHRTGAGAFDAQNDDYLILLAEGRLVNLGNATGHPSRIMDGSFANQVLAQIFLFGQKYADLSPAQKAERLTVEVLPKKLDEEVALEMVRGFGGVVTQLTKTQADYIGVTVEGPFKPHAYRY.

3 residues coordinate substrate: threonine 63, aspartate 139, and glutamate 164. 165–167 (TTT) is an NAD(+) binding site. Lysine 194 and aspartate 198 together coordinate substrate. NAD(+)-binding positions include asparagine 199, 228-233 (GYGDVG), glutamate 251, asparagine 300, 321-323 (IGH), and asparagine 375.

It belongs to the adenosylhomocysteinase family. The cofactor is NAD(+).

The protein localises to the cytoplasm. The enzyme catalyses S-adenosyl-L-homocysteine + H2O = L-homocysteine + adenosine. It participates in amino-acid biosynthesis; L-homocysteine biosynthesis; L-homocysteine from S-adenosyl-L-homocysteine: step 1/1. Its function is as follows. May play a key role in the regulation of the intracellular concentration of adenosylhomocysteine. The chain is Adenosylhomocysteinase from Pseudomonas fluorescens (strain SBW25).